A 206-amino-acid polypeptide reads, in one-letter code: Ribosomal RNA large subunit methyltransferase E (206 aa).

5 residues coordinate S-adenosyl-L-methionine: Gly60, Trp62, Asp80, Asp96, and Asp121. The active-site Proton acceptor is Lys161.

It belongs to the class I-like SAM-binding methyltransferase superfamily. RNA methyltransferase RlmE family.

It localises to the cytoplasm. The catalysed reaction is uridine(2552) in 23S rRNA + S-adenosyl-L-methionine = 2'-O-methyluridine(2552) in 23S rRNA + S-adenosyl-L-homocysteine + H(+). Functionally, specifically methylates the uridine in position 2552 of 23S rRNA at the 2'-O position of the ribose in the fully assembled 50S ribosomal subunit. The sequence is that of Ribosomal RNA large subunit methyltransferase E from Hahella chejuensis (strain KCTC 2396).